The primary structure comprises 413 residues: Lysosomal phospholipase A and acyltransferase (413 aa).

A signal peptide spans 1 to 33; sequence MDRHLCICREIQLRSGLLFPFLLLMMLADLALP. Residue D46 coordinates substrate. A disulfide bond links C65 and C89. N99 is a glycosylation site (N-linked (GlcNAc...) asparagine). The active-site Acyl-ester intermediate is the S198. Position 198 (S198) interacts with Zn(2+). M199 provides a ligand contact to substrate. Residues N273 and N289 are each glycosylated (N-linked (GlcNAc...) asparagine). C355 is a binding site for Zn(2+). Catalysis depends on charge relay system residues D360 and H392. H392 provides a ligand contact to Zn(2+). N-linked (GlcNAc...) asparagine glycosylation is present at N398.

Belongs to the AB hydrolase superfamily. Lipase family. In terms of processing, N-glycosylated. N-glycosylation is important for maturation of the enzyme and normal subcellular location. In terms of tissue distribution, detected in alveolar macrophages (at protein level). Widely expressed. Expressed at highest levels in alveolar macrophages.

The protein resides in the lysosome. It is found in the secreted. It localises to the membrane. It catalyses the reaction a 1,2-diacyl-sn-glycero-3-phosphocholine + H2O = a 2-acyl-sn-glycero-3-phosphocholine + a fatty acid + H(+). The enzyme catalyses 1,2-dihexadecanoyl-sn-glycero-3-phosphocholine + H2O = 2-hexadecanoyl-sn-glycero-3-phosphocholine + hexadecanoate + H(+). The catalysed reaction is 1-hexadecanoyl-2-(9Z-octadecenoyl)-sn-glycero-3-phosphocholine + H2O = 2-(9Z-octadecenoyl)-sn-glycero-3-phosphocholine + hexadecanoate + H(+). It carries out the reaction 1,2-di-(9Z-octadecenoyl)-sn-glycero-3-phosphocholine + H2O = 2-(9Z-octadecenoyl)-sn-glycero-3-phosphocholine + (9Z)-octadecenoate + H(+). It catalyses the reaction 1-hexadecanoyl-2-glutaroyl-sn-glycero-3-phosphocholine + H2O = 2-glutaroyl-sn-glycero-3-phosphocholine + hexadecanoate + H(+). The enzyme catalyses 1-hexadecanoyl-2-nonadioyl-sn-glycero-3-phosphocholine + H2O = 2-nonadioyl-sn-glycero-3-phosphocholine + hexadecanoate + H(+). The catalysed reaction is 1-hexadecanoyl-2-(5-oxopentanoyl)-sn-glycero-3-phosphocholine + H2O = 2-(5-oxopentanoyl)-sn-glycero-3-phosphocholine + hexadecanoate + H(+). It carries out the reaction 1-hexadecanoyl-2-(9-oxononanoyl)-sn-glycero-3-phosphocholine + H2O = 2-(9-oxononanoyl)-sn-glycero-3-phosphocholine + hexadecanoate + H(+). It catalyses the reaction a 1,2-diacyl-sn-glycero-3-phosphocholine + H2O = a 1-acyl-sn-glycero-3-phosphocholine + a fatty acid + H(+). The enzyme catalyses 1,2-dihexadecanoyl-sn-glycero-3-phosphocholine + H2O = 1-hexadecanoyl-sn-glycero-3-phosphocholine + hexadecanoate + H(+). The catalysed reaction is 1-hexadecanoyl-2-(9Z-octadecenoyl)-sn-glycero-3-phosphocholine + H2O = 1-hexadecanoyl-sn-glycero-3-phosphocholine + (9Z)-octadecenoate + H(+). It carries out the reaction 1,2-di-(9Z-octadecenoyl)-sn-glycero-3-phosphocholine + H2O = 1-(9Z-octadecenoyl)-sn-glycero-3-phosphocholine + (9Z)-octadecenoate + H(+). It catalyses the reaction a 1-acyl-sn-glycero-3-phosphocholine + H2O = sn-glycerol 3-phosphocholine + a fatty acid + H(+). The enzyme catalyses 1-hexadecanoyl-sn-glycero-3-phosphocholine + H2O = sn-glycerol 3-phosphocholine + hexadecanoate + H(+). The catalysed reaction is N-(acetyl)-sphing-4-enine + a 1,2-diacyl-sn-glycero-3-phosphoethanolamine = 1-O-acyl-N-(acetyl)-sphing-4-enine + a 2-acyl-sn-glycero-3-phosphoethanolamine. It carries out the reaction 1-hexadecanoyl-2-(9Z-octadecenoyl)-sn-glycero-3-phosphoethanolamine + N-(acetyl)-sphing-4-enine = 2-(9Z-octadecenoyl)-sn-glycero-3-phosphoethanolamine + 1-hexadecanoyl-N-(acetyl)-sphing-4-enine. It catalyses the reaction 1-hexadecanoyl-2-(9Z,12Z-octadecadienoyl)-sn-glycero-3-phosphoethanolamine + N-(acetyl)-sphing-4-enine = 2-(9Z,12Z)-octadecadienoyl-sn-glycero-3-phosphoethanolamine + 1-hexadecanoyl-N-(acetyl)-sphing-4-enine. The enzyme catalyses 1-hexadecanoyl-2-(5Z,8Z,11Z,14Z-eicosatetraenoyl)-sn-glycero-3-phosphoethanolamine + N-(acetyl)-sphing-4-enine = 2-(5Z,8Z,11Z,14Z)-eicosatetraenoyl-sn-glycero-3-phosphoethanolamine + 1-hexadecanoyl-N-(acetyl)-sphing-4-enine. The catalysed reaction is N-(acetyl)-sphing-4-enine + a 1,2-diacyl-sn-glycero-3-phosphoethanolamine = 1-O-acyl-N-(acetyl)-sphing-4-enine + a 1-acyl-sn-glycero-3-phosphoethanolamine. It carries out the reaction 1-hexadecanoyl-2-(9Z-octadecenoyl)-sn-glycero-3-phosphoethanolamine + N-(acetyl)-sphing-4-enine = 1-(9Z-octadecenoyl)-N-(acetyl)-sphing-4-enine + 1-hexadecanoyl-sn-glycero-3-phosphoethanolamine. It catalyses the reaction 1-hexadecanoyl-2-(9Z,12Z-octadecadienoyl)-sn-glycero-3-phosphoethanolamine + N-(acetyl)-sphing-4-enine = 1-(9Z,12Z-octadecadienoyl)-N-acetylsphing-4-enine + 1-hexadecanoyl-sn-glycero-3-phosphoethanolamine. The enzyme catalyses 1-hexadecanoyl-2-(5Z,8Z,11Z,14Z-eicosatetraenoyl)-sn-glycero-3-phosphoethanolamine + N-(acetyl)-sphing-4-enine = 1-(5Z,8Z,11Z,14Z)-eicosatetraenoyl-N-(acetyl)-sphing-4-enine + 1-hexadecanoyl-sn-glycero-3-phosphoethanolamine. The catalysed reaction is N-(acetyl)-sphing-4-enine + a 1,2-diacyl-sn-glycero-3-phosphocholine = 1-O-acyl-N-(acetyl)-sphing-4-enine + a 2-acyl-sn-glycero-3-phosphocholine. It carries out the reaction 1-hexadecanoyl-2-(9Z-octadecenoyl)-sn-glycero-3-phosphocholine + N-(acetyl)-sphing-4-enine = 1-hexadecanoyl-N-(acetyl)-sphing-4-enine + 2-(9Z-octadecenoyl)-sn-glycero-3-phosphocholine. It catalyses the reaction 1-hexadecanoyl-2-(9Z,12Z-octadecadienoyl)-sn-glycero-3-phosphocholine + N-(acetyl)-sphing-4-enine = 2-(9Z,12Z-octadecadienoyl)-sn-glycero-3-phosphocholine + 1-hexadecanoyl-N-(acetyl)-sphing-4-enine. The enzyme catalyses 1-hexadecanoyl-2-(5Z,8Z,11Z,14Z-eicosatetraenoyl)-sn-glycero-3-phosphocholine + N-(acetyl)-sphing-4-enine = 1-hexadecanoyl-N-(acetyl)-sphing-4-enine + 2-(5Z,8Z,11Z,14Z)-eicosatetraenoyl-sn-glycero-3-phosphocholine. The catalysed reaction is 1-hexadecanoyl-2-(4Z,7Z,10Z,13Z,16Z,19Z-docosahexaenoyl)-sn-glycero-3-phosphocholine + N-(acetyl)-sphing-4-enine = 2-(4Z,7Z,10Z,13Z,16Z,19Z-docosahexaenoyl)-sn-glycero-3-phosphocholine + 1-hexadecanoyl-N-(acetyl)-sphing-4-enine. It carries out the reaction 1-hexadecanoyl-2-nonadioyl-sn-glycero-3-phosphocholine + N-(acetyl)-sphing-4-enine = 2-nonadioyl-sn-glycero-3-phosphocholine + 1-hexadecanoyl-N-(acetyl)-sphing-4-enine. It catalyses the reaction 1-octadecanoyl-2-(9Z-octadecenoyl)-sn-glycero-3-phosphocholine + N-(acetyl)-sphing-4-enine = 1-octadecanoyl-N-(acetyl)-sphing-4-enine + 2-(9Z-octadecenoyl)-sn-glycero-3-phosphocholine. The enzyme catalyses 1-(9Z)-octadecenoyl-2-octadecanoyl-sn-glycero-3-phosphocholine + N-(acetyl)-sphing-4-enine = 2-octadecanoyl-sn-glycero-3-phosphocholine + 1-(9Z-octadecenoyl)-N-(acetyl)-sphing-4-enine. The catalysed reaction is 1-octadecanoyl-2-(5Z,8Z,11Z,14Z-eicosatetraenoyl)-sn-glycero-3-phosphocholine + N-(acetyl)-sphing-4-enine = 1-octadecanoyl-N-(acetyl)-sphing-4-enine + 2-(5Z,8Z,11Z,14Z)-eicosatetraenoyl-sn-glycero-3-phosphocholine. It carries out the reaction 1-(9Z-octadecenoyl)-2-hexadecanoyl-sn-glycero-3-phosphocholine + N-(acetyl)-sphing-4-enine = 1-(9Z-octadecenoyl)-N-(acetyl)-sphing-4-enine + 2-hexadecanoyl-sn-glycero-3-phosphocholine. It catalyses the reaction N-(acetyl)-sphing-4-enine + a 1,2-diacyl-sn-glycero-3-phosphocholine = 1-O-acyl-N-(acetyl)-sphing-4-enine + a 1-acyl-sn-glycero-3-phosphocholine. The enzyme catalyses 1-hexadecanoyl-2-(9Z-octadecenoyl)-sn-glycero-3-phosphocholine + N-(acetyl)-sphing-4-enine = 1-(9Z-octadecenoyl)-N-(acetyl)-sphing-4-enine + 1-hexadecanoyl-sn-glycero-3-phosphocholine. The catalysed reaction is 1-hexadecanoyl-2-(9Z,12Z-octadecadienoyl)-sn-glycero-3-phosphocholine + N-(acetyl)-sphing-4-enine = 1-(9Z,12Z-octadecadienoyl)-N-acetylsphing-4-enine + 1-hexadecanoyl-sn-glycero-3-phosphocholine. It carries out the reaction 1-hexadecanoyl-2-(5Z,8Z,11Z,14Z-eicosatetraenoyl)-sn-glycero-3-phosphocholine + N-(acetyl)-sphing-4-enine = 1-(5Z,8Z,11Z,14Z)-eicosatetraenoyl-N-(acetyl)-sphing-4-enine + 1-hexadecanoyl-sn-glycero-3-phosphocholine. It catalyses the reaction 1-hexadecanoyl-2-(4Z,7Z,10Z,13Z,16Z,19Z-docosahexaenoyl)-sn-glycero-3-phosphocholine + N-(acetyl)-sphing-4-enine = 1-(4Z,7Z,10Z,13Z,16Z,19Z-docosahexaenoyl)-N-(acetyl)-sphing-4-enine + 1-hexadecanoyl-sn-glycero-3-phosphocholine. The enzyme catalyses 1-octadecanoyl-2-(9Z-octadecenoyl)-sn-glycero-3-phosphocholine + N-(acetyl)-sphing-4-enine = 1-(9Z-octadecenoyl)-N-(acetyl)-sphing-4-enine + 1-octadecanoyl-sn-glycero-3-phosphocholine. The catalysed reaction is 1-octadecanoyl-2-(9Z,12Z)-octadecadienoyl-sn-glycero-3-phosphocholine + N-(acetyl)-sphing-4-enine = 1-(9Z,12Z-octadecadienoyl)-N-acetylsphing-4-enine + 1-octadecanoyl-sn-glycero-3-phosphocholine. It carries out the reaction 1-(9Z-octadecenoyl)-2-hexadecanoyl-sn-glycero-3-phosphocholine + N-(acetyl)-sphing-4-enine = 1-hexadecanoyl-N-(acetyl)-sphing-4-enine + 1-(9Z-octadecenoyl)-sn-glycero-3-phosphocholine. It catalyses the reaction 1-(9Z)-octadecenoyl-2-octadecanoyl-sn-glycero-3-phosphocholine + N-(acetyl)-sphing-4-enine = 1-octadecanoyl-N-(acetyl)-sphing-4-enine + 1-(9Z-octadecenoyl)-sn-glycero-3-phosphocholine. The enzyme catalyses 1,2-di-(9Z-octadecenoyl)-sn-glycero-3-phosphocholine + N-(acetyl)-sphing-4-enine = 1-(9Z-octadecenoyl)-N-(acetyl)-sphing-4-enine + 1-(9Z-octadecenoyl)-sn-glycero-3-phosphocholine. The catalysed reaction is 1-octadecanoyl-2-(5Z,8Z,11Z,14Z-eicosatetraenoyl)-sn-glycero-3-phosphocholine + N-(acetyl)-sphing-4-enine = 1-(5Z,8Z,11Z,14Z)-eicosatetraenoyl-N-(acetyl)-sphing-4-enine + 1-octadecanoyl-sn-glycero-3-phosphocholine. It carries out the reaction a 1,2-diacyl-sn-glycero-3-phospho-L-serine + N-(acetyl)-sphing-4-enine = a 2-acyl-sn-glycero-3-phospho-L-serine + 1-O-acyl-N-(acetyl)-sphing-4-enine. It catalyses the reaction 1-octadecanoyl-2-(9Z-octadecenoyl)-sn-glycero-3-phospho-L-serine + N-(acetyl)-sphing-4-enine = 2-(9Z-octadecenoyl)-sn-glycero-3-phospho-L-serine + 1-octadecanoyl-N-(acetyl)-sphing-4-enine. The enzyme catalyses a 1,2-diacyl-sn-glycero-3-phospho-L-serine + N-(acetyl)-sphing-4-enine = 1-O-acyl-N-(acetyl)-sphing-4-enine + a 1-acyl-sn-glycero-3-phospho-L-serine. The catalysed reaction is 1-octadecanoyl-2-(9Z-octadecenoyl)-sn-glycero-3-phospho-L-serine + N-(acetyl)-sphing-4-enine = 1-octadecanoyl-sn-glycero-3-phosphoserine + 1-(9Z-octadecenoyl)-N-(acetyl)-sphing-4-enine. It carries out the reaction a 1,2-diacyl-sn-glycero-3-phospho-(1'-sn-glycerol) + N-(acetyl)-sphing-4-enine = 2-acyl-sn-glycero-3-phospho-(1'-sn-glycerol) + 1-O-acyl-N-(acetyl)-sphing-4-enine. It catalyses the reaction 1-octadecanoyl-2-(9Z-octadecenoyl)-sn-glycero-3-phospho-(1'-sn-glycerol) + N-(acetyl)-sphing-4-enine = 2-(9Z-octadecenoyl)-sn-glycero-3-phospho-(1'-sn-glycerol) + 1-octadecanoyl-N-(acetyl)-sphing-4-enine. The enzyme catalyses a 1,2-diacyl-sn-glycero-3-phospho-(1'-sn-glycerol) + N-(acetyl)-sphing-4-enine = 1-O-acyl-N-(acetyl)-sphing-4-enine + 1-acyl-sn-glycero-3-phospho-(1'-sn-glycerol). The catalysed reaction is 1-octadecanoyl-2-(9Z-octadecenoyl)-sn-glycero-3-phospho-(1'-sn-glycerol) + N-(acetyl)-sphing-4-enine = 1-octadecanoyl-sn-glycero-3-phospho-(1'-sn-glycerol) + 1-(9Z-octadecenoyl)-N-(acetyl)-sphing-4-enine. It carries out the reaction an N-acylethanolamine + a 1,2-diacyl-sn-glycero-3-phosphocholine = 2-(acylamino)ethyl fatty acid + a 2-acyl-sn-glycero-3-phosphocholine. It catalyses the reaction an N-acylethanolamine + a 1,2-diacyl-sn-glycero-3-phosphocholine = 2-(acylamino)ethyl fatty acid + a 1-acyl-sn-glycero-3-phosphocholine. The enzyme catalyses N-(5Z,8Z,11Z,14Z-eicosatetraenoyl)-ethanolamine + 1,2-di-(9Z-octadecenoyl)-sn-glycero-3-phosphocholine = 2-[(5Z,8Z,11Z,14Z)-eicosatetraenoylamino]ethyl (9Z)-octadecenoate + (9Z-octadecenoyl)-sn-glycero-3-phosphocholine. The catalysed reaction is N-(9Z-octadecenoyl) ethanolamine + 1,2-di-(9Z-octadecenoyl)-sn-glycero-3-phosphocholine = 2-[(9Z)-octadecenoylamino]ethyl (9Z)-octadecenoate + (9Z-octadecenoyl)-sn-glycero-3-phosphocholine. It carries out the reaction a 3-acyl-sn-glycerol + a 1,2-diacyl-sn-glycero-3-phosphocholine = a 1,3-diacylglycerol + a 1-acyl-sn-glycero-3-phosphocholine. It catalyses the reaction a 3-acyl-sn-glycerol + a 1,2-diacyl-sn-glycero-3-phosphocholine = a 1,3-diacylglycerol + a 2-acyl-sn-glycero-3-phosphocholine. The enzyme catalyses 3-(9Z-octadecenoyl)-sn-glycerol + 1,2-di-(9Z-octadecenoyl)-sn-glycero-3-phosphocholine = 1,3-di-(9Z-octadecenoyl)-glycerol + (9Z-octadecenoyl)-sn-glycero-3-phosphocholine. The catalysed reaction is 3-hexadecanoyl-sn-glycerol + 1,2-di-(9Z-octadecenoyl)-sn-glycero-3-phosphocholine = 1-(9Z)-octadecenoyl-3-hexadecanoyl-sn-glycerol + (9Z-octadecenoyl)-sn-glycero-3-phosphocholine. It carries out the reaction a 1-acyl-sn-glycerol + a 1,2-diacyl-sn-glycero-3-phosphocholine = a 1,3-diacylglycerol + a 2-acyl-sn-glycero-3-phosphocholine. It catalyses the reaction a 1-acyl-sn-glycerol + a 1,2-diacyl-sn-glycero-3-phosphocholine = a 1,3-diacylglycerol + a 1-acyl-sn-glycero-3-phosphocholine. The enzyme catalyses 1-(9Z-octadecenoyl)-sn-glycerol + 1,2-di-(9Z-octadecenoyl)-sn-glycero-3-phosphocholine = 1,3-di-(9Z-octadecenoyl)-glycerol + (9Z-octadecenoyl)-sn-glycero-3-phosphocholine. The catalysed reaction is 1-hexadecanoyl-sn-glycerol + 1,2-di-(9Z-octadecenoyl)-sn-glycero-3-phosphocholine = 1-hexadecanoyl-3-(9Z)-octadecenoyl-sn-glycerol + (9Z-octadecenoyl)-sn-glycero-3-phosphocholine. It carries out the reaction a 2-acylglycerol + a 1,2-diacyl-sn-glycero-3-phosphocholine = a 1,2-diacylglycerol + a 2-acyl-sn-glycero-3-phosphocholine. It catalyses the reaction a 2-acylglycerol + a 1,2-diacyl-sn-glycero-3-phosphocholine = a 1,2-diacylglycerol + a 1-acyl-sn-glycero-3-phosphocholine. The enzyme catalyses 2-hexadecanoylglycerol + 1,2-di-(9Z-octadecenoyl)-sn-glycero-3-phosphocholine = 1-(9Z)-octadecenoyl-2-hexadecanoylglycerol + (9Z-octadecenoyl)-sn-glycero-3-phosphocholine. The catalysed reaction is 1-O-alkylglycerol + a 1,2-diacyl-sn-glycero-3-phosphocholine = 1-O-alkyl-3-acylglycerol + a 1-acyl-sn-glycero-3-phosphocholine. It carries out the reaction 1-O-alkylglycerol + a 1,2-diacyl-sn-glycero-3-phosphocholine = 1-O-alkyl-3-acylglycerol + a 2-acyl-sn-glycero-3-phosphocholine. It catalyses the reaction 1-O-hexadecylglycerol + 1,2-di-(9Z-octadecenoyl)-sn-glycero-3-phosphocholine = 1-O-hexadecyl-3-(9Z)-octadecenoylglycerol + (9Z-octadecenoyl)-sn-glycero-3-phosphocholine. The enzyme catalyses 1-O-alkyl-2-acyl-sn-glycerol + a 1,2-diacyl-sn-glycero-3-phosphocholine = 1-O-alkyl-2,3-diacyl-sn-glycerol + a 2-acyl-sn-glycero-3-phosphocholine. The catalysed reaction is 1-O-alkyl-2-acyl-sn-glycerol + a 1,2-diacyl-sn-glycero-3-phosphocholine = 1-O-alkyl-2,3-diacyl-sn-glycerol + a 1-acyl-sn-glycero-3-phosphocholine. It carries out the reaction 1-O-hexadecyl-2-acetyl-sn-glycerol + 1,2-di-(9Z-octadecenoyl)-sn-glycero-3-phosphocholine = 1-O-hexadecyl-2-acetyl-3-(9Z)-octadecenoyl-sn-glycerol + (9Z-octadecenoyl)-sn-glycero-3-phosphocholine. It catalyses the reaction 1-O-hexadecyl-2-O-methyl-sn-glycerol + 1,2-di-(9Z-octadecenoyl)-sn-glycero-3-phosphocholine = 1-O-hexadecyl-2-O-methyl-3-(9Z)-octadecenoyl-sn-glycerol + (9Z-octadecenoyl)-sn-glycero-3-phosphocholine. The enzyme catalyses a 1,2-diacyl-sn-glycero-3-phosphoethanolamine + H2O = a 1-acyl-sn-glycero-3-phosphoethanolamine + a fatty acid + H(+). The catalysed reaction is 1-acyl-2-(5Z,8Z,11Z,14Z)-eicosatetraenoyl-sn-glycero-3-phosphoethanolamine + H2O = a 1-acyl-sn-glycero-3-phosphoethanolamine + (5Z,8Z,11Z,14Z)-eicosatetraenoate + H(+). It carries out the reaction a 1,2-diacyl-sn-glycero-3-phospho-(1'-sn-glycerol) + H2O = 1-acyl-sn-glycero-3-phospho-(1'-sn-glycerol) + a fatty acid + H(+). It catalyses the reaction 1-hexadecanoyl-2-(9Z-octadecenoyl)-sn-glycero-3-phospho-(1'-sn-glycerol) + H2O = 1-hexadecanoyl-sn-glycero-3-phospho-(1'-sn-glycerol) + (9Z)-octadecenoate + H(+). The enzyme catalyses a 1,2-diacyl-sn-glycero-3-phospho-(1'-sn-glycerol) + H2O = 2-acyl-sn-glycero-3-phospho-(1'-sn-glycerol) + a fatty acid + H(+). The catalysed reaction is 1-hexadecanoyl-2-(9Z-octadecenoyl)-sn-glycero-3-phospho-(1'-sn-glycerol) + H2O = 2-(9Z-octadecenoyl)-sn-glycero-3-phospho-(1'-sn-glycerol) + hexadecanoate + H(+). With respect to regulation, transacylase activity is inhibited by MJ33. Its function is as follows. Has dual calcium-independent phospholipase and O-acyltransferase activities with a potential role in glycerophospholipid homeostasis and remodeling of acyl groups of lipophilic alcohols present in acidic cellular compartments. Catalyzes hydrolysis of the ester bond of the fatty acyl group attached at sn-1 or sn-2 position of phospholipids (phospholipase A1 or A2 activity) and transfer it to the hydroxyl group at the first carbon of lipophilic alcohols (O-acyltransferase activity). Among preferred fatty acyl donors are phosphatidylcholines, phosphatidylethanolamines, phosphatidylglycerols and phosphatidylserines. Favors sn-2 over sn-1 deacylation of unsaturated fatty acyl groups of phosphatidylcholines, phosphatidylethanolamines, and phosphatidylglycerols. Among preferred fatty acyl acceptors are natural lipophilic alcohols including short-chain ceramide N-acetyl-sphingosine (C2 ceramide), alkylacylglycerols, monoacylglycerols, and acylethanolamides such as anandamide and oleoylethanolamide. Selectively hydrolyzes the sn-1 fatty acyl group of truncated oxidized phospholipids and may play a role in detoxification of reactive oxidized phospholipids during oxidative stress. Required for normal phospholipid degradation in alveolar macrophages with potential implications in the clearance of pulmonary surfactant, which is mainly composed of dipalmitoylphosphatidylcholine (1,2-dihexadecanoyl-sn-glycero-3-phosphocholine). Involved in the first step of bis(monoacylglycero)phosphate (BMP) de novo synthesis from phosphatidylglycerol (1,2-diacyl-sn-glycero-3-phospho-(1'-sn-glycerol), PG). BMP is an important player in cargo sorting and degradation, regulation of cellular cholesterol levels and intercellular communication. At neutral pH, hydrolyzes the sn-1 fatty acyl group of the lysophosphatidylcholines. In Rattus norvegicus (Rat), this protein is Lysosomal phospholipase A and acyltransferase (Pla2g15).